The following is a 736-amino-acid chain: MAYVAVPAVVDSRSSEAIGLLESFGVTATKEESDVQYQDHDYVLDQLQYMLDGYEAGDVIDALVYRNWLHESVYCLLPPKSQLLEYWKSNPAVIPESVDRRLRKRLMMKKDLRKDDEYNQLVRAFKLSDVYTPLVSSSTSPMTMIQSINQNQIVYSTTDRVIGARISLYAPRKYYSATLSFTLNRCIIPYGKNVAPIGHARFNIGTFPSLASPKCFVLSSVDIESIPNEFIKLFYQRVRSVHANILNDISPQLLSDMLQRKRLRVSSPNERKIAQIMHLPYHVKRGATHVDVYRVDVVDVLFEVVDIKDGLRSVSRKLTLQTVPVSVIELIGLETADYCIRKENGMFTDWFLLLTMLSDGLIDRRTHSQYLINPSSIPPDVIINIYVSGFTNRRVIDVMPEMYDFVKPIGAVLPKGSFKSTIMRVLDEMEVLGVRIMPRCHVVDSDEVGERMQPTFEHAVMEIYKGIAGVDSLEELINWVLGPDLIPHDERLGKLYQSFLPLAKDLLAPVARHFYEESLSEGRLLTFAHADSELLNANYFGHLLRLKIPFITEVNLMIRKNREGGELFQLVLSYLYKMYATSAQPMWFGSLLRLMICPWLHMEKLIGDADAAITSAEVGWHIPKEHLMQDGWCGCEDGFITYVVIRAPKLVLEELREKNWGQYHAQVIVTDRLEVGEPRRVHARVVIKGNHMPSKLISRYACFSLTMRYMMHLTCGHSIGRSSAYGARLVFRSSLA.

This sequence belongs to the orthoreovirus mu-2 protein family. Interacts with protein mu-NS; in viral inclusions. Interacts with polymerase lambda-3; this interaction stimulates the ATPase activity of mu-2. A divalent metal cation is required as a cofactor.

The protein resides in the virion. Its subcellular location is the host cytoplasm. The protein localises to the host cytoskeleton. In terms of biological role, minor inner capsid (core) component. Displays NTPase and RNA 5'-triphosphatase (RTPase) activities. ATP is the preferred substrate for hydrolysis. May function as a cofactor of polymerase lambda-3. Associates with microtubules and plays a role in the formation, structural organization and morphology of viral inclusions, where the assembly of cores and the replication of viral RNA occur. Together with mu-NS, recruits the other core proteins to these inclusions. This chain is Microtubule-associated protein mu-2 (M1), found in Mammalia (T2J).